A 502-amino-acid chain; its full sequence is Tryptophan decarboxylase TDC1 (502 aa).

Polar residues predominate over residues methionine 1–glutamine 18. The interval methionine 1–proline 21 is disordered. Lysine 319 is subject to N6-(pyridoxal phosphate)lysine.

This sequence belongs to the group II decarboxylase family. Pyridoxal 5'-phosphate is required as a cofactor. Highly expressed in apex. Expressed in young stem and bark tissues. Expressed at low levels in leaves, fruits and seeds.

The catalysed reaction is L-tryptophan + H(+) = tryptamine + CO2. Involved in the biosynthesis of tryptamine. Supplies tryptamine for the indole moiety of camptothecin (CPT), an anti-cancer monoterpene alkaloid. Represents a key step in monoterpene indole alkaloid biosynthesis. Is specific for tryptophan, and inactive against tyrosine, phenylalanine and 3,4-dihydroxyphenylalanine (dopa). This Camptotheca acuminata (Happy tree) protein is Tryptophan decarboxylase TDC1.